The following is a 126-amino-acid chain: Protein VraC (126 aa).

The chain is Protein VraC from Staphylococcus haemolyticus (strain JCSC1435).